A 600-amino-acid polypeptide reads, in one-letter code: Pyranose dehydrogenase 2 (600 aa).

An N-terminal signal peptide occupies residues 1 to 25 (MLSRVAKLNSRLVSLALLGSQIAFG). N-linked (GlcNAc...) asparagine glycosylation is found at N99 and N114. H127 bears the Tele-8alpha-FAD histidine mark. N-linked (GlcNAc...) asparagine glycans are attached at residues N199, N275, and N342. The active-site Proton acceptor is the H535. H579 is an active-site residue.

The protein belongs to the GMC oxidoreductase family. In terms of assembly, monomer. Requires FAD as cofactor. Post-translationally, N-glycosylated.

The protein resides in the secreted. The catalysed reaction is pyranose + acceptor = pyranos-2-ulose + reduced acceptor.. The enzyme catalyses pyranose + acceptor = pyranos-3-ulose + reduced acceptor.. It carries out the reaction pyranose + acceptor = pyranos-2,3-diulose + reduced acceptor.. It catalyses the reaction a pyranoside + acceptor = a pyranosid-3-ulose + reduced acceptor.. The catalysed reaction is a pyranoside + acceptor = a pyranosid-3,4-diulose + reduced acceptor.. Catalyzes the single-oxidation or sequential double oxidation reaction of carbohydrates primarily at carbon-2 and/or carbon-3 with the concomitant reduction of the flavin. The enzyme exhibits a broad sugar substrate specificity, oxidizing different aldopyranoses to the corresponding C-1, C-2, C-3 or C-1,2, C-2,3 and C-3,4 (di)dehydro sugars with substrate-specific regioselectivity. Accepts only a narrow range of electron acceptors such as substituted benzoquinones and complexed metal ions and reacts extremely slowly with O(2) as acceptor. May play a role in the natural recycling of plant matter by oxidizing all major monosaccharides in lignocellulose and by reducing quinone compounds or reactive radical species generated during lignin depolymerization. The protein is Pyranose dehydrogenase 2 of Leucoagaricus meleagris (Western flat-topped agaric).